A 141-amino-acid polypeptide reads, in one-letter code: Hemoglobin subunit alpha (141 aa).

Residues 1–141 form the Globin domain; it reads VLSGDDKSNL…VSTVLTSKYR (141 aa). A Phosphoserine modification is found at Ser3. Lys7 and Lys11 each carry N6-succinyllysine. N6-acetyllysine; alternate is present on Lys16. Lys16 bears the N6-succinyllysine; alternate mark. Position 24 is a phosphotyrosine (Tyr24). Position 40 is an N6-succinyllysine (Lys40). Position 49 is a phosphoserine (Ser49). His58 is a binding site for O2. Position 87 (His87) interacts with heme b. Ser102 carries the post-translational modification Phosphoserine. Residue Thr108 is modified to Phosphothreonine. Phosphoserine occurs at positions 124 and 131. Phosphothreonine is present on residues Thr134 and Thr137. Residue Ser138 is modified to Phosphoserine.

Belongs to the globin family. Heterotetramer of two alpha chains and two beta chains. As to expression, red blood cells.

Its function is as follows. Involved in oxygen transport from the lung to the various peripheral tissues. The protein is Hemoglobin subunit alpha of Microtus pennsylvanicus (Meadow vole).